The chain runs to 157 residues: Chromophore lyase CpcS/CpeS 1 (157 aa).

It belongs to the CpcS/CpeS biliprotein lyase family.

It is found in the plastid. The protein localises to the organellar chromatophore. Its function is as follows. Covalently attaches a chromophore to Cys residue(s) of phycobiliproteins. The sequence is that of Chromophore lyase CpcS/CpeS 1 from Paulinella chromatophora.